The following is a 284-amino-acid chain: Tropomyosin (284 aa).

Residues 1-284 (MDAIKKKMVA…DATFAELAGY (284 aa)) adopt a coiled-coil conformation. A compositionally biased stretch (basic and acidic residues) spans 32 to 41 (TEEAKAKIED). A disordered region spans residues 32–60 (TEEAKAKIEDDYNSLQKKSIQTENDLDNT). Residues 44–60 (NSLQKKSIQTENDLDNT) show a composition bias toward polar residues.

The protein belongs to the tropomyosin family. Homodimer.

Functionally, tropomyosin, in association with the troponin complex, plays a central role in the calcium dependent regulation of muscle contraction. This Mytilus edulis (Blue mussel) protein is Tropomyosin.